Consider the following 208-residue polypeptide: Fusaric acid resistance protein FusD (208 aa).

The helical transmembrane segment at 7–29 (LLLSMLVSAIAFAVLFPPTAPWL) threads the bilayer.

The protein localises to the cell membrane. Its function is as follows. Involved in the resistance (detoxification) of the fungal toxin fusaric acid. The sequence is that of Fusaric acid resistance protein FusD (fusD) from Burkholderia cepacia (Pseudomonas cepacia).